An 855-amino-acid polypeptide reads, in one-letter code: MAEGFAANRQWIGPEEAEELLDFDIATQMNEEGPLNPGINPFRVPGITETEKQDYCNMLQPKLQALRNEIQEVKLEEGNAGKFRRARFLRYSDETILSLIHLFIGYCTYLLNRKELGSLRHDIDIEAPQEECYSSREQSITDNIKYGKRCFIGTAGLYLLLFIGVGIYLGTAKAQVVWRLPPLVVPVEESEIIFWDCWAPEEPACQDFLGAMIHLKASTNISIQEGPTLGNWAKEIWGTLFKKATRQCRRGRIWKRWNETITGPLGCANNTCYNISVIVPDYQCYLDRVDTWLQGKVNVSLCLTGGKILYNKYTKQLSYCTDPLQIPLISYTFGPNQTCMWDTSQIQDPEIPKCGWWNQIAYYNSCRWESTDVKFHCQRTQSQPGLWLRAISSWKQRNRWEWRPDFESEKAKVSLQCNSTKNLTFAMRSSGDYGEVTGAWIEFGCHRNKSKLHTEARFRIRCRWNVGDNTSLIDTCGETQNVSGANPVDCTMYANRMYNCSLQNGFTMKVDDLIMHFNMTKAVEMYDIAGNWSCTSDLPPTWGYMNCNCTNSSSTNSVKMACPKNQGILRNWYNPVAGLRQSLEKYQVVKQPDYLVVPGEVMEYKPRRKRAAIHVMLALATVLSMAGAGTGATAIGMVTQYHQVLATHQETIEKVTEALKINNLRLVTLEHQVLVIGLKVEAMEKFLYTAFAMQELGCNQNQFFCKVPPELWKRYNMTINQTIWNHGNITLGEWYNQTKELQQKFYEIIMNIEQNNVQVKKGLQQLQEWEDWVGWIGNIPQYLKGLLGGILGIGIGVLLLILCLPTLVDCIRNCISKVLGYTVIAMPEIGDEEETVQMELRKNGRQCGMSEKEEE.

Residues 1–784 (MAEGFAANRQ…WIGNIPQYLK (784 aa)) are Extracellular-facing. 16 N-linked (GlcNAc...) asparagine; by host glycosylation sites follow: Asn-220, Asn-258, Asn-269, Asn-274, Asn-298, Asn-336, Asn-418, Asn-422, Asn-448, Asn-469, Asn-481, Asn-499, Asn-518, Asn-531, Asn-548, and Asn-551. Residues 615-635 (VMLALATVLSMAGAGTGATAI) are fusion peptide. The stretch at 642 to 692 (HQVLATHQETIEKVTEALKINNLRLVTLEHQVLVIGLKVEAMEKFLYTAFA) forms a coiled coil. The segment at 661–679 (INNLRLVTLEHQVLVIGLK) is immunosuppression. 4 N-linked (GlcNAc...) asparagine; by host glycosylation sites follow: Asn-716, Asn-720, Asn-728, and Asn-736. Residues 735 to 771 (YNQTKELQQKFYEIIMNIEQNNVQVKKGLQQLQEWED) adopt a coiled-coil conformation. The chain crosses the membrane as a helical span at residues 785–805 (GLLGGILGIGIGVLLLILCLP). The Cytoplasmic portion of the chain corresponds to 806–855 (TLVDCIRNCISKVLGYTVIAMPEIGDEEETVQMELRKNGRQCGMSEKEEE).

The mature envelope protein (Env) consists of a trimer of SU-TM heterodimers attached by noncovalent interactions or by a labile interchain disulfide bond. Specific enzymatic cleavages in vivo yield mature proteins. Envelope glycoproteins are synthesized as an inactive precursor that is N-glycosylated and processed likely by host cell furin or by a furin-like protease in the Golgi to yield the mature SU and TM proteins. The cleavage site between SU and TM requires the minimal sequence [KR]-X-[KR]-R.

The protein localises to the virion membrane. It is found in the host cell membrane. Its function is as follows. The surface protein (SU) attaches the virus to the host cell by binding to its receptor. This interaction triggers the refolding of the transmembrane protein (TM) and is thought to activate its fusogenic potential by unmasking its fusion peptide. Fusion occurs at the host cell plasma membrane. The transmembrane protein (TM) acts as a class I viral fusion protein. Under the current model, the protein has at least 3 conformational states: pre-fusion native state, pre-hairpin intermediate state, and post-fusion hairpin state. During viral and target cell membrane fusion, the coiled coil regions (heptad repeats) assume a trimer-of-hairpins structure, positioning the fusion peptide in close proximity to the C-terminal region of the ectodomain. The formation of this structure appears to drive apposition and subsequent fusion of viral and target cell membranes. Membranes fusion leads to delivery of the nucleocapsid into the cytoplasm. The sequence is that of Envelope glycoprotein gp150 (env) from Felidae (cat family).